Here is a 252-residue protein sequence, read N- to C-terminus: Acetoacetate decarboxylase (252 aa).

Catalysis depends on Lys116, which acts as the Schiff-base intermediate with acetoacetate.

This sequence belongs to the ADC family.

The enzyme catalyses acetoacetate + H(+) = acetone + CO2. Functionally, catalyzes the conversion of acetoacetate to acetone and carbon dioxide. The polypeptide is Acetoacetate decarboxylase (Paraburkholderia xenovorans (strain LB400)).